Consider the following 227-residue polypeptide: Killer cell lectin-like receptor subfamily B member 1A (227 aa).

Topologically, residues Met1 to Cys45 are cytoplasmic. The LCK-binding motif signature appears at Cys31–Pro34. Residues Ala46–Ile66 traverse the membrane as a helical; Signal-anchor for type II membrane protein segment. The Extracellular portion of the chain corresponds to Gln67–His227. The 120-residue stretch at Glu93–Lys212 folds into the C-type lectin domain. 3 disulfide bridges follow: Cys94–Cys105, Cys122–Cys210, and Cys189–Cys202.

As to quaternary structure, homodimer; disulfide-linked. Interacts with tyrosine kinase LCK. In terms of tissue distribution, expressed in natural killer cells.

Its subcellular location is the membrane. Its function is as follows. Plays a stimulatory role on natural killer (NK) cell cytotoxicity. The sequence is that of Killer cell lectin-like receptor subfamily B member 1A (Klrb1a) from Mus musculus (Mouse).